Reading from the N-terminus, the 1042-residue chain is FHIP family protein AAEL005291 (1042 aa).

Polar residues predominate over residues 1–14 (MSWLRSSPLRQSFS). 4 disordered regions span residues 1–31 (MSWLRSSPLRQSFSKAGGGSGSGASSRGGNS), 494–514 (NNTSQASSMLGSGPSSMPQGG), 821–866 (PHSG…KRND), and 905–977 (SNSS…GSPH). Over residues 839–859 (VSMTSNLSQTTPMQLTPSSSY) the composition is skewed to polar residues. Composition is skewed to low complexity over residues 905–940 (SNSSSISHQSSSTPSPAGSQQYLSSNSSGVSSFMGS) and 956–976 (PSIGGPPSSMGPTSLTSTGSP).

Belongs to the FHIP family.

This is FHIP family protein AAEL005291 from Aedes aegypti (Yellowfever mosquito).